Here is a 128-residue protein sequence, read N- to C-terminus: Large ribosomal subunit protein bL19 (128 aa).

Belongs to the bacterial ribosomal protein bL19 family.

In terms of biological role, this protein is located at the 30S-50S ribosomal subunit interface and may play a role in the structure and function of the aminoacyl-tRNA binding site. The protein is Large ribosomal subunit protein bL19 of Janthinobacterium sp. (strain Marseille) (Minibacterium massiliensis).